A 419-amino-acid chain; its full sequence is UDP-N-acetylglucosamine 1-carboxyvinyltransferase (419 aa).

A phosphoenolpyruvate-binding site is contributed by 22-23 (KN). Arg92 contributes to the UDP-N-acetyl-alpha-D-glucosamine binding site. The Proton donor role is filled by Cys116. Cys116 carries the 2-(S-cysteinyl)pyruvic acid O-phosphothioketal modification. UDP-N-acetyl-alpha-D-glucosamine contacts are provided by Asp307 and Val329.

It belongs to the EPSP synthase family. MurA subfamily.

The protein localises to the cytoplasm. The enzyme catalyses phosphoenolpyruvate + UDP-N-acetyl-alpha-D-glucosamine = UDP-N-acetyl-3-O-(1-carboxyvinyl)-alpha-D-glucosamine + phosphate. It participates in cell wall biogenesis; peptidoglycan biosynthesis. Functionally, cell wall formation. Adds enolpyruvyl to UDP-N-acetylglucosamine. In Pseudothermotoga lettingae (strain ATCC BAA-301 / DSM 14385 / NBRC 107922 / TMO) (Thermotoga lettingae), this protein is UDP-N-acetylglucosamine 1-carboxyvinyltransferase.